A 552-amino-acid polypeptide reads, in one-letter code: Acyl-CoA-dependent acyltransferase MAC1 (552 aa).

The protein belongs to the trichothecene O-acetyltransferase family.

It functions in the pathway secondary metabolite biosynthesis. Functionally, acyl-CoA-dependent acyltransferase; part of the gene cluster that mediates the biosynthesis of mannosylerythritol lipids (MELs), surface-active substances that enhance the availability of water-insoluble substrates. Depending on the number of acetyl groups, mannosylerythritol lipids can be differentiated into MEL A (fully acetylated), MEL B and MEL C (monoacetylated at R-6 and R-4, respectively), and the fully deacetylated MEL D. The first step in the pathway is the generation of mannosylerythritol by the glycosyltransferase EMT1 which catalyzes the transfer of GDP-mannose to the C-4 atom of meso-erythritol. This reaction has to be stereospecific, since only mannosyl-D-erythritol is generated. The produced disaccharide is subsequently acylated with fatty acids of various lengths by the acyltransferases MAC1 and MAC2 at positions C-2 and C-3, repectively. The existence of MEL derivatives which carry an acetyl group at C-2 implies that at least MAC1 also accepts acetyl-CoA as a donor. The final step of MEL biosynthesis is the acetylation of the fully acylated mannosylerythritol lipids catalyzed by the acetyl-CoA-dependent acetyltransferase MAT1. MAT1 displays a relaxed regioselectivity and is able to transfer acetylgroups to both positions C-4 and C-6 of the mannosyl moiety. This Pseudozyma antarctica (strain T-34) (Yeast) protein is Acyl-CoA-dependent acyltransferase MAC1.